The following is a 434-amino-acid chain: Maltoporin (434 aa).

Residues 1-25 (MKMKAKWLPIAAAVTAALASQAAFA) form the signal peptide.

This sequence belongs to the porin LamB (TC 1.B.3) family. As to quaternary structure, homotrimer formed of three 18-stranded antiparallel beta-barrels, containing three independent channels.

Its subcellular location is the cell outer membrane. The catalysed reaction is beta-maltose(in) = beta-maltose(out). In terms of biological role, involved in the transport of maltose and maltodextrins. The chain is Maltoporin from Aeromonas hydrophila.